Here is a 103-residue protein sequence, read N- to C-terminus: Large ribosomal subunit protein bL21 (103 aa).

The protein belongs to the bacterial ribosomal protein bL21 family. In terms of assembly, part of the 50S ribosomal subunit. Contacts protein L20.

Its function is as follows. This protein binds to 23S rRNA in the presence of protein L20. The sequence is that of Large ribosomal subunit protein bL21 from Dechloromonas aromatica (strain RCB).